Consider the following 423-residue polypeptide: AP-1 complex subunit mu-2 (423 aa).

One can recognise an MHD domain in the interval Lys168–Arg421.

Belongs to the adaptor complexes medium subunit family. As to quaternary structure, adaptor protein complex 1 (AP-1) is a heterotetramer composed of two large adaptins (gamma-type subunit AP1G1 and beta-type subunit AP1B1), a medium adaptin (mu-type subunit AP1M1 or AP1M2) and a small adaptin (sigma-type subunit AP1S1 or AP1S2 or AP1S3). Interacts with P2X4. Phosphorylation of membrane-bound AP1M1/AP1M2 increases its affinity for sorting signals.

Its subcellular location is the golgi apparatus. It localises to the cytoplasmic vesicle. The protein resides in the clathrin-coated vesicle membrane. Functionally, subunit of clathrin-associated adaptor protein complex 1 that plays a role in protein sorting in the trans-Golgi network (TGN) and endosomes. The AP complexes mediate the recruitment of clathrin to membranes and the recognition of sorting signals within the cytosolic tails of transmembrane cargo molecules. The chain is AP-1 complex subunit mu-2 (Ap1m2) from Rattus norvegicus (Rat).